The sequence spans 1351 residues: DNA-directed RNA polymerase subunit beta' (1351 aa).

Residues Cys-70, Cys-72, Cys-85, and Cys-88 each contribute to the Zn(2+) site. Residues Asp-460, Asp-462, and Asp-464 each contribute to the Mg(2+) site. Zn(2+) contacts are provided by Cys-801, Cys-875, Cys-882, and Cys-885.

The protein belongs to the RNA polymerase beta' chain family. As to quaternary structure, the RNAP catalytic core consists of 2 alpha, 1 beta, 1 beta' and 1 omega subunit. When a sigma factor is associated with the core the holoenzyme is formed, which can initiate transcription. Mg(2+) is required as a cofactor. Zn(2+) serves as cofactor.

It catalyses the reaction RNA(n) + a ribonucleoside 5'-triphosphate = RNA(n+1) + diphosphate. In terms of biological role, DNA-dependent RNA polymerase catalyzes the transcription of DNA into RNA using the four ribonucleoside triphosphates as substrates. The chain is DNA-directed RNA polymerase subunit beta' from Syntrophobacter fumaroxidans (strain DSM 10017 / MPOB).